The following is a 293-amino-acid chain: Exosome complex component RRP4 (293 aa).

The region spanning 79–159 is the S1 motif domain; it reads EVGDIVVGRI…SDGAVSLHTR (81 aa). S124 carries the phosphoserine modification.

Belongs to the RRP4 family. Component of the RNA exosome core complex (Exo-9), composed of EXOSC1, EXOSC2, EXOSC3, EXOSC4, EXOSC5, EXOSC6, EXOSC7, EXOSC8 and EXOSC9; within the complex interacts with EXOSC4 and EXOSC7. The catalytically inactive RNA exosome core complex (Exo-9) associates with the catalytic subunit EXOSC10/RRP6. Exo-9 may associate with DIS3 to form the nucleolar exosome complex, or DIS3L to form the cytoplasmic exosome complex. Exo-9 is formed by a hexameric base ring consisting of the heterodimers EXOSC4-EXOSC9, EXOSC5-EXOSC8 and EXOSC6-EXOSC7, and a cap ring consisting of EXOSC1, EXOSC2 and EXOSC3. The RNA exosome complex associates with cofactors C1D/RRP47, MPHOSPH6/MPP6 and MTREX/MTR4. Interacts with GTPBP1. Interacts with ZFP36L1 (via N-terminus).

The protein localises to the cytoplasm. Its subcellular location is the nucleus. It is found in the nucleolus. Non-catalytic component of the RNA exosome complex which has 3'-&gt;5' exoribonuclease activity and participates in a multitude of cellular RNA processing and degradation events. In the nucleus, the RNA exosome complex is involved in proper maturation of stable RNA species such as rRNA, snRNA and snoRNA, in the elimination of RNA processing by-products and non-coding 'pervasive' transcripts, such as antisense RNA species and promoter-upstream transcripts (PROMPTs), and of mRNAs with processing defects, thereby limiting or excluding their export to the cytoplasm. The RNA exosome may be involved in Ig class switch recombination (CSR) and/or Ig variable region somatic hypermutation (SHM) by targeting AICDA deamination activity to transcribed dsDNA substrates. In the cytoplasm, the RNA exosome complex is involved in general mRNA turnover and specifically degrades inherently unstable mRNAs containing AU-rich elements (AREs) within their 3' untranslated regions, and in RNA surveillance pathways, preventing translation of aberrant mRNAs. It seems to be involved in degradation of histone mRNA. The catalytic inactive RNA exosome core complex of 9 subunits (Exo-9) is proposed to play a pivotal role in the binding and presentation of RNA for ribonucleolysis, and to serve as a scaffold for the association with catalytic subunits and accessory proteins or complexes. EXOSC2 as peripheral part of the Exo-9 complex stabilizes the hexameric ring of RNase PH-domain subunits through contacts with EXOSC4 and EXOSC7. This chain is Exosome complex component RRP4, found in Homo sapiens (Human).